We begin with the raw amino-acid sequence, 345 residues long: Methionine import ATP-binding protein MetN 2 (345 aa).

Residues 4-243 (IELRHVKKEF…PQTEIAKRFI (240 aa)) enclose the ABC transporter domain. 40 to 47 (GYSGAGKS) lines the ATP pocket.

It belongs to the ABC transporter superfamily. Methionine importer (TC 3.A.1.24) family. In terms of assembly, the complex is composed of two ATP-binding proteins (MetN), two transmembrane proteins (MetI) and a solute-binding protein (MetQ).

The protein localises to the cell membrane. It catalyses the reaction L-methionine(out) + ATP + H2O = L-methionine(in) + ADP + phosphate + H(+). The catalysed reaction is D-methionine(out) + ATP + H2O = D-methionine(in) + ADP + phosphate + H(+). Functionally, part of the ABC transporter complex MetNIQ involved in methionine import. Responsible for energy coupling to the transport system. The chain is Methionine import ATP-binding protein MetN 2 from Enterococcus faecalis (strain ATCC 700802 / V583).